The primary structure comprises 363 residues: G-protein coupled receptor 4 (363 aa).

Over 1-8 (MGNGTWEG) the chain is Extracellular. An N-linked (GlcNAc...) asparagine glycan is attached at Asn-3. Residues 9-45 (CHVDSRVDHLFPPSLYIFVIGVGLPTNCLALWAAYRQ) form a helical membrane-spanning segment. 2 disulfides stabilise this stretch: Cys-9–Cys-258 and Cys-90–Cys-168. At 46 to 49 (VRQR) the chain is on the cytoplasmic side. A helical membrane pass occupies residues 50–80 (NELGVYLMNLSIADLLYICTLPLWVDYFLHH). The Extracellular segment spans residues 81 to 85 (DNWIH). The helical transmembrane segment at 86-121 (GPGSCKLFGFIFYTNIYISIAFLCCISVDRYLAVAH) threads the bilayer. Topologically, residues 122–129 (PLRFARLR) are cytoplasmic. A helical membrane pass occupies residues 130–156 (RVKTAVAVSSVVWATELGANSVPLFHD). Residues 157-172 (ELFRDRYNHTFCFEKF) lie on the Extracellular side of the membrane. The interval 157 to 172 (ELFRDRYNHTFCFEKF) is extracellular loop 2 (ECL2). The N-linked (GlcNAc...) asparagine glycan is linked to Asn-164. The helical transmembrane segment at 173 to 210 (PMEGWVAWMNLYRVFVGFLFPWALMLLSYRGILRAVRG) threads the bilayer. At 211–214 (SVST) the chain is on the cytoplasmic side. A helical membrane pass occupies residues 215–250 (ERQEKAKIKRLALSLIAIVLVCFAPYHVLLLSRSAV). Topologically, residues 251–260 (YLGHPWDCGF) are extracellular. A helical membrane pass occupies residues 261-289 (EERVFSAYHSSLAFTSLNCVADPILYCLV). The Cytoplasmic segment spans residues 290 to 363 (NEGARSDVAK…QLKMLPPPAP (74 aa)). The interval 344-363 (ASPPSQGDQVQLKMLPPPAP) is disordered.

Belongs to the G-protein coupled receptor 1 family.

Its subcellular location is the cell membrane. Activated by a network of residues that connects an extracellular-facing cavity to Glu-145, a conserved charged residue buried in the transmembrane core of the receptor. Protonation likely drives conformational changes in extracellular loop 2 (ECL2), which stabilizes movement of transmembrane 3 (TM3) and a series of rearrangements that connect the extracellular-facing cavity to Glu-145, a residue only conserved in proton-sensing G-protein coupled receptors. In terms of biological role, proton-sensing G-protein coupled receptor activated by extracellular pH, which is required to monitor pH changes and generate adaptive reactions. Activated by an optimal pH of 6.8-7.2. Ligand binding causes a conformation change that triggers signaling via guanine nucleotide-binding proteins (G proteins) and modulates the activity of downstream effectors, such as adenylate cyclase. GPR4 is mainly coupled to G(s) G proteins and mediates activation of adenylate cyclase activity. May also couple with G(q) and G(12)/G(13) G proteins. Acts as a key regulator of respiratory sensitivity to CO2/H(+) in brain retrotrapezoid nucleus neurons: acts by mediating detection of protons generated by the formation of carbonic acid in the blood, an important mechanism to impulse to breathe. Also acts as a regulator of acid secretion in the kidney collecting duct by maintaining acid-base homeostasis in the kidney. Acidosis-induced GPR4 activation increases paracellular gap formation and permeability of vascular endothelial cells, possibly through the G(12)/G(13)/Rho GTPase signaling pathway. The protein is G-protein coupled receptor 4 (GPR4) of Sus scrofa (Pig).